Consider the following 635-residue polypeptide: Chaperone protein DnaK (635 aa).

At threonine 198 the chain carries Phosphothreonine; by autocatalysis. Residues 598–635 (YAKAQPGEEQAGGAPHEGEAKDEKVVDADFEEVKEDKK) are disordered. The segment covering 613–624 (HEGEAKDEKVVD) has biased composition (basic and acidic residues). The segment covering 625–635 (ADFEEVKEDKK) has biased composition (acidic residues).

Belongs to the heat shock protein 70 family.

In terms of biological role, acts as a chaperone. This chain is Chaperone protein DnaK, found in Geotalea uraniireducens (strain Rf4) (Geobacter uraniireducens).